Consider the following 159-residue polypeptide: Ribosomal RNA large subunit methyltransferase H (159 aa).

Residues Leu-76, Gly-108, and 127–132 (FSKMTF) contribute to the S-adenosyl-L-methionine site.

The protein belongs to the RNA methyltransferase RlmH family. Homodimer.

It is found in the cytoplasm. The catalysed reaction is pseudouridine(1915) in 23S rRNA + S-adenosyl-L-methionine = N(3)-methylpseudouridine(1915) in 23S rRNA + S-adenosyl-L-homocysteine + H(+). Its function is as follows. Specifically methylates the pseudouridine at position 1915 (m3Psi1915) in 23S rRNA. This Staphylococcus haemolyticus (strain JCSC1435) protein is Ribosomal RNA large subunit methyltransferase H.